Reading from the N-terminus, the 193-residue chain is Selenate reductase assembly chaperone protein (193 aa).

This sequence belongs to the type II DMSO reductase enzyme chaperone family.

It localises to the cytoplasm. Functionally, may function as a system-specific chaperone protein essential for the assembly of an active selenate reductase SerABC. This chain is Selenate reductase assembly chaperone protein, found in Thauera selenatis.